A 311-amino-acid chain; its full sequence is Protein N-terminal asparagine amidohydrolase (311 aa).

In terms of assembly, monomer.

Its subcellular location is the cytoplasm. The enzyme catalyses N-terminal L-asparaginyl-[protein] + H2O + H(+) = N-terminal L-aspartyl-[protein] + NH4(+). Functionally, N-terminal asparagine deamidase that mediates deamidation of N-terminal asparagine residues to aspartate. Required for the ubiquitin-dependent turnover of intracellular proteins that initiate with Met-Asn. These proteins are acetylated on the retained initiator methionine and can subsequently be modified by the removal of N-acetyl methionine by acylaminoacid hydrolase (AAH). Conversion of the resulting N-terminal asparagine to aspartate by NTAN1/PNAD renders the protein susceptible to arginylation, polyubiquitination and degradation as specified by the N-end rule. This enzyme does not act on substrates with internal or C-terminal asparagines and does not act on glutamine residues in any position. In Sus scrofa (Pig), this protein is Protein N-terminal asparagine amidohydrolase (NTAN1).